A 509-amino-acid chain; its full sequence is Monofunctional riboflavin biosynthesis protein RIBA 3, chloroplastic (509 aa).

The N-terminal 43 residues, 1 to 43, are a transit peptide targeting the chloroplast; that stretch reads MMDSALYHPRIFFAHSFINGLYSSPRFANTCWRLVSRSSWEIK. The tract at residues 44 to 302 is inactive DHBP synthase; the sequence is ASENSDRNVF…LTDLIRYRRK (259 aa). D-ribulose 5-phosphate contacts are provided by residues 125–126 and 240–244; these read GD and RAGHT. A GTP cyclohydrolase II region spans residues 303 to 509; sequence RDKLVERITV…ISDNNDQPLA (207 aa). 353–357 contacts GTP; sequence RVHSE. 3 residues coordinate Zn(2+): C358, C369, and C371. GTP-binding positions include Q374, 397-399, and T419; that span reads EGR. The active-site Proton acceptor; for GTP cyclohydrolase activity is the D431. R433 functions as the Nucleophile; for GTP cyclohydrolase activity in the catalytic mechanism. Residues T454 and K459 each contribute to the GTP site.

In the N-terminal section; belongs to the DHBP synthase family. The protein in the C-terminal section; belongs to the GTP cyclohydrolase II family. Zn(2+) is required as a cofactor. Expressed in leaves, shoots, roots, flowers and siliques.

The protein localises to the plastid. The protein resides in the chloroplast. The enzyme catalyses GTP + 4 H2O = 2,5-diamino-6-hydroxy-4-(5-phosphoribosylamino)-pyrimidine + formate + 2 phosphate + 3 H(+). It functions in the pathway cofactor biosynthesis; riboflavin biosynthesis; 5-amino-6-(D-ribitylamino)uracil from GTP: step 1/4. Its function is as follows. Involved in riboflavin biosynthesis. Catalyzes the conversion of GTP to 2,5-diamino-6-ribosylamino-4(3H)-pyrimidinone 5'-phosphate (DARP), formate and pyrophosphate. RIBA2 and RIBA3 together are not able to complement the loss of function of RIBA1. In Arabidopsis thaliana (Mouse-ear cress), this protein is Monofunctional riboflavin biosynthesis protein RIBA 3, chloroplastic (RIBA3).